Reading from the N-terminus, the 334-residue chain is Glycerol-3-phosphate dehydrogenase [NAD(P)+] (334 aa).

NADPH-binding residues include Ser14, Tyr15, Arg35, and Lys109. Lys109, Gly138, and Thr140 together coordinate sn-glycerol 3-phosphate. Ala142 serves as a coordination point for NADPH. Residues Lys194, Asp247, Ser257, Arg258, and Asn259 each contribute to the sn-glycerol 3-phosphate site. Lys194 acts as the Proton acceptor in catalysis. Position 258 (Arg258) interacts with NADPH. NADPH contacts are provided by Val282 and Glu284.

The protein belongs to the NAD-dependent glycerol-3-phosphate dehydrogenase family.

The protein resides in the cytoplasm. The enzyme catalyses sn-glycerol 3-phosphate + NAD(+) = dihydroxyacetone phosphate + NADH + H(+). The catalysed reaction is sn-glycerol 3-phosphate + NADP(+) = dihydroxyacetone phosphate + NADPH + H(+). The protein operates within membrane lipid metabolism; glycerophospholipid metabolism. In terms of biological role, catalyzes the reduction of the glycolytic intermediate dihydroxyacetone phosphate (DHAP) to sn-glycerol 3-phosphate (G3P), the key precursor for phospholipid synthesis. The chain is Glycerol-3-phosphate dehydrogenase [NAD(P)+] from Colwellia psychrerythraea (strain 34H / ATCC BAA-681) (Vibrio psychroerythus).